Consider the following 100-residue polypeptide: Large ribosomal subunit protein uL23 (100 aa).

The protein belongs to the universal ribosomal protein uL23 family. In terms of assembly, part of the 50S ribosomal subunit. Contacts protein L29, and trigger factor when it is bound to the ribosome.

One of the early assembly proteins it binds 23S rRNA. One of the proteins that surrounds the polypeptide exit tunnel on the outside of the ribosome. Forms the main docking site for trigger factor binding to the ribosome. The polypeptide is Large ribosomal subunit protein uL23 (Vibrio atlanticus (strain LGP32) (Vibrio splendidus (strain Mel32))).